The sequence spans 483 residues: GDP-fucose protein O-fucosyltransferase 3 (483 aa).

Residues 1 to 8 (MVRIPRRK) are Cytoplasmic-facing. Residues 9–31 (LLPSCLCMTATVFLMVTVQVLVE) form a helical; Signal-anchor for type II membrane protein membrane-spanning segment. Residues 32–483 (LGKFERKKFK…FWALVFKDSF (452 aa)) are Lumenal-facing. Residues 45 to 64 (LQDGQKDVEGDPKHLNPLPK) are disordered. N-linked (GlcNAc...) asparagine glycosylation is found at N110, N168, and N318. The cysteines at positions 389 and 392 are disulfide-linked. An N-linked (GlcNAc...) asparagine glycan is attached at N468.

Belongs to the glycosyltransferase 10 family.

It localises to the endoplasmic reticulum membrane. The catalysed reaction is L-threonyl-[protein] + GDP-beta-L-fucose = 3-O-(alpha-L-fucosyl)-L-threonyl-[protein] + GDP + H(+). It carries out the reaction L-seryl-[protein] + GDP-beta-L-fucose = 3-O-(alpha-L-fucosyl)-L-seryl-[protein] + GDP + H(+). Its pathway is protein modification; protein glycosylation. Functionally, protein O-fucosyltransferase that specifically catalyzes O-fucosylation of serine or threonine residues in EMI domains of target proteins, such as MMRN1, MMRN2 and EMID1. Attaches fucose through an O-glycosidic linkage. O-fucosylation of EMI domain-containing proteins may be required for facilitating protein folding and secretion. May also show alpha-(1,3)-fucosyltransferase activity toward the innermost N-acetyl glucosamine (GlcNAc) residue in biantennary N-glycan acceptors. However, this was tested with a library of synthetic substrates and this activity is unsure in vivo. May be involved in biosynthesis of Lewis X-carrying biantennary N-glycans that regulate neuron stem cell self-renewal during brain development. The sequence is that of GDP-fucose protein O-fucosyltransferase 3 (Fut10) from Rattus norvegicus (Rat).